The primary structure comprises 219 residues: Orotidine 5'-phosphate decarboxylase (219 aa).

Residues aspartate 10, lysine 32, aspartate 58–threonine 67, serine 113, proline 163–tyrosine 173, glycine 186, and arginine 187 contribute to the substrate site. Lysine 60 functions as the Proton donor in the catalytic mechanism.

Belongs to the OMP decarboxylase family. Type 1 subfamily. In terms of assembly, homodimer.

It catalyses the reaction orotidine 5'-phosphate + H(+) = UMP + CO2. It functions in the pathway pyrimidine metabolism; UMP biosynthesis via de novo pathway; UMP from orotate: step 2/2. Functionally, catalyzes the decarboxylation of orotidine 5'-monophosphate (OMP) to uridine 5'-monophosphate (UMP). The polypeptide is Orotidine 5'-phosphate decarboxylase (Thermoplasma volcanium (strain ATCC 51530 / DSM 4299 / JCM 9571 / NBRC 15438 / GSS1)).